The sequence spans 87 residues: Small ribosomal subunit protein bS20 (87 aa).

Belongs to the bacterial ribosomal protein bS20 family.

Binds directly to 16S ribosomal RNA. This chain is Small ribosomal subunit protein bS20, found in Parvibaculum lavamentivorans (strain DS-1 / DSM 13023 / NCIMB 13966).